A 236-amino-acid chain; its full sequence is Ribosomal RNA small subunit methyltransferase G (236 aa).

S-adenosyl-L-methionine is bound by residues Gly80, 131–132 (AE), and Arg148.

It belongs to the methyltransferase superfamily. RNA methyltransferase RsmG family.

The protein localises to the cytoplasm. Its function is as follows. Specifically methylates the N7 position of a guanine in 16S rRNA. The chain is Ribosomal RNA small subunit methyltransferase G from Ureaplasma parvum serovar 3 (strain ATCC 27815 / 27 / NCTC 11736).